A 143-amino-acid chain; its full sequence is Small ribosomal subunit protein bS18m (143 aa).

It belongs to the bacterial ribosomal protein bS18 family. As to quaternary structure, component of the mitochondrial ribosome small subunit (28S) which comprises a 12S rRNA and about 30 distinct proteins.

It is found in the mitochondrion. This chain is Small ribosomal subunit protein bS18m (MRPS18C), found in Bos taurus (Bovine).